The following is a 222-amino-acid chain: Charged multivesicular body protein 2a (222 aa).

M1 is modified (N-acetylmethionine). Residues 12 to 53 (EELLRQNQRALNRAMRELDRERQKLETQEKKIIADIKKMAKQ) adopt a coiled-coil conformation. The interval 56–222 (MDAVRIMAKD…EERLKNLRRD (167 aa)) is interaction with VPS4B. Position 184 is a phosphoserine (S184). T185 carries the phosphothreonine modification. S188, S190, and S203 each carry phosphoserine. A coiled-coil region spans residues 195-222 (GKKAEAAASALADADADLEERLKNLRRD). The MIT-interacting motif signature appears at 210-220 (ADLEERLKNLR). The segment at 217 to 222 (KNLRRD) is interaction with VTA1.

Belongs to the SNF7 family. In terms of assembly, probable core component of the endosomal sorting required for transport complex III (ESCRT-III). ESCRT-III components are thought to multimerize to form a flat lattice on the perimeter membrane of the endosome. Several assembly forms of ESCRT-III may exist that interact and act sequentially. In vitro, heteromerizes with CHMP3 (but not CHMP4) to form helical tubular structures that expose membrane-interacting sites on the outside whereas VPS4B can associate on the inside of the tubule. Interacts with CHMP1B, CHMP2B, CHMP3, CHMP4A, CHMP4B, CHMP4C and CHMP5. Interacts with VPS4A; the interaction is direct. Interacts with VPS4B; the interaction is direct. Interacts with MITD1. Interacts with VTA1; the interaction probably involves the open conformation of CHMP2A. In terms of processing, ISGylated in a CHMP5-dependent manner. Isgylation weakens and inhibits its interactions with VPS4A and VTA1 respectively.

The protein resides in the late endosome membrane. It localises to the nucleus envelope. In terms of biological role, probable core component of the endosomal sorting required for transport complex III (ESCRT-III) which is involved in multivesicular bodies (MVBs) formation and sorting of endosomal cargo proteins into MVBs. MVBs contain intraluminal vesicles (ILVs) that are generated by invagination and scission from the limiting membrane of the endosome and mostly are delivered to lysosomes enabling degradation of membrane proteins, such as stimulated growth factor receptors, lysosomal enzymes and lipids. The MVB pathway appears to require the sequential function of ESCRT-O, -I,-II and -III complexes. ESCRT-III proteins mostly dissociate from the invaginating membrane before the ILV is released. The ESCRT machinery also functions in topologically equivalent membrane fission events, such as the terminal stages of cytokinesis. Together with SPAST, the ESCRT-III complex promotes nuclear envelope sealing and mitotic spindle disassembly during late anaphase. Recruited to the reforming nuclear envelope (NE) during anaphase by LEMD2. ESCRT-III proteins are believed to mediate the necessary vesicle extrusion and/or membrane fission activities, possibly in conjunction with the AAA ATPase VPS4. Its function is as follows. (Microbial infection) The ESCRT machinery functions in topologically equivalent membrane fission events, such as the budding of enveloped viruses (HIV-1 and other lentiviruses). Involved in HIV-1 p6- and p9-dependent virus release. This is Charged multivesicular body protein 2a (CHMP2A) from Homo sapiens (Human).